An 82-amino-acid chain; its full sequence is UPF0180 protein BAA_1480 (82 aa).

It belongs to the UPF0180 family.

This is UPF0180 protein BAA_1480 from Bacillus anthracis (strain A0248).